The following is a 510-amino-acid chain: Probable malate:quinone oxidoreductase (510 aa).

The protein belongs to the MQO family. FAD serves as cofactor.

The catalysed reaction is (S)-malate + a quinone = a quinol + oxaloacetate. It functions in the pathway carbohydrate metabolism; tricarboxylic acid cycle; oxaloacetate from (S)-malate (quinone route): step 1/1. The chain is Probable malate:quinone oxidoreductase from Wigglesworthia glossinidia brevipalpis.